Here is a 286-residue protein sequence, read N- to C-terminus: tRNA (guanine-N(7)-)-methyltransferase (286 aa).

Residues E91, E116, N143, and D165 each coordinate S-adenosyl-L-methionine. D165 is an active-site residue. Residues K169, D201, and 262–265 (TNFE) contribute to the substrate site.

Belongs to the class I-like SAM-binding methyltransferase superfamily. TrmB family.

The catalysed reaction is guanosine(46) in tRNA + S-adenosyl-L-methionine = N(7)-methylguanosine(46) in tRNA + S-adenosyl-L-homocysteine. The protein operates within tRNA modification; N(7)-methylguanine-tRNA biosynthesis. Functionally, catalyzes the formation of N(7)-methylguanine at position 46 (m7G46) in tRNA. The polypeptide is tRNA (guanine-N(7)-)-methyltransferase (Bifidobacterium longum subsp. infantis (strain ATCC 15697 / DSM 20088 / JCM 1222 / NCTC 11817 / S12)).